The following is a 537-amino-acid chain: Cytoplasmic dynein 2 intermediate chain 2 (537 aa).

Ser-15 bears the Phosphoserine mark. A DYNLL2 binding region spans residues 80–93 (RTHADAQVQTEAPE). Residues 107-132 (LRLEAFLRRVEAMVIRELNNNWQSHA) are DYNLRB1 binding. 5 WD repeats span residues 216–256 (EVPS…DPLL), 265–309 (THTD…QLRL), 391–431 (PHGG…PLTS), 434–474 (LSHK…QKPT), and 481–521 (QDGS…TEQG).

The protein belongs to the dynein light intermediate chain family. The cytoplasmic dynein 2 complex consists of two catalytic heavy chains (HCs) and a number of non-catalytic subunits presented by intermediate chains (ICs), light intermediate chains (LICs) and light chains (LCs). Among them, a heavy chain (DYNC2H1), two intermediate chains (DYNC2I2 and DYNC2I1), a light intermediate chain (DYNC2LI1), and a light chain (DYNLT2B) are unique to the cytoplasmic dynein complex 2, but a subset of the light chains are also shared by dynein-1 and dynein-2 complexes. Interacts with DYNC2I1; their C-terminal domains each bind a copy of the heavy chain, and their extended N-terminal regions are held together by an array of light chain dimers. Interacts with DYNLL2; this interaction is essential for dynein-2-mediated retrograde trafficking of ciliary proteins. Interacts with DYNLRB1; this interaction is essential for dynein-2-mediated retrograde trafficking of ciliary proteins. Interacts (via the WD domains) with MAP3K7 and TAB3. Interacts (via WD domains) with TAB2 (via C-terminus). Interacts (via WD domains) with TRAF6 (via TRAF-type domains). In terms of tissue distribution, expressed in brain, thymus, heart, lung, liver, spleen, kidney, testis and intestine.

The protein resides in the cytoplasm. Its subcellular location is the cytoskeleton. The protein localises to the cilium basal body. It localises to the cilium axoneme. It is found in the cell projection. The protein resides in the cilium. Its subcellular location is the microtubule organizing center. The protein localises to the centrosome. It localises to the filopodium. In terms of biological role, acts as one of several non-catalytic accessory components of the cytoplasmic dynein 2 complex (dynein-2 complex), a motor protein complex that drives the movement of cargos along microtubules within cilia and flagella in concert with the intraflagellar transport (IFT) system. DYNC2I2 plays a major role in retrograde ciliary protein trafficking and in ciliogenesis. Required also to maintain a functional transition zone. Its function is as follows. Acts as a negative regulator of the Toll-like and IL-1R receptor signaling pathways. Inhibits the MAP3K7-induced NF-kappa-B activation pathway. Inhibits MAP3K7 phosphorylation at 'Thr-184' and 'Thr-187' upon Il-1 beta stimulation. The polypeptide is Cytoplasmic dynein 2 intermediate chain 2 (Dync2i2) (Mus musculus (Mouse)).